Here is a 59-residue protein sequence, read N- to C-terminus: Large ribosomal subunit protein uL30 (59 aa).

Belongs to the universal ribosomal protein uL30 family. In terms of assembly, part of the 50S ribosomal subunit.

The polypeptide is Large ribosomal subunit protein uL30 (Psychrobacter arcticus (strain DSM 17307 / VKM B-2377 / 273-4)).